A 491-amino-acid chain; its full sequence is Protein nucleotidyltransferase YdiU (491 aa).

ATP-binding residues include G94, G96, R97, K117, D129, G130, R180, and R187. The active-site Proton acceptor is the D256. Residues N257 and D266 each coordinate Mg(2+). D266 provides a ligand contact to ATP.

Belongs to the SELO family. Mg(2+) is required as a cofactor. The cofactor is Mn(2+).

It carries out the reaction L-seryl-[protein] + ATP = 3-O-(5'-adenylyl)-L-seryl-[protein] + diphosphate. The catalysed reaction is L-threonyl-[protein] + ATP = 3-O-(5'-adenylyl)-L-threonyl-[protein] + diphosphate. It catalyses the reaction L-tyrosyl-[protein] + ATP = O-(5'-adenylyl)-L-tyrosyl-[protein] + diphosphate. The enzyme catalyses L-histidyl-[protein] + UTP = N(tele)-(5'-uridylyl)-L-histidyl-[protein] + diphosphate. It carries out the reaction L-seryl-[protein] + UTP = O-(5'-uridylyl)-L-seryl-[protein] + diphosphate. The catalysed reaction is L-tyrosyl-[protein] + UTP = O-(5'-uridylyl)-L-tyrosyl-[protein] + diphosphate. Nucleotidyltransferase involved in the post-translational modification of proteins. It can catalyze the addition of adenosine monophosphate (AMP) or uridine monophosphate (UMP) to a protein, resulting in modifications known as AMPylation and UMPylation. The protein is Protein nucleotidyltransferase YdiU of Clostridium botulinum (strain Alaska E43 / Type E3).